The primary structure comprises 154 residues: Egg-lysin (154 aa).

A signal peptide spans 1-18; sequence MKLLVLCIFAMMATLAMS.

In terms of assembly, homodimer. As to expression, sperm.

In terms of biological role, dissolves the egg vitelline layer nonenzymatically during fertilization. It creates a hole of about 3 mu-m in diameter through which the sperm pass. This is Egg-lysin from Haliotis sorenseni (White abalone).